Reading from the N-terminus, the 555-residue chain is F-box protein COS111 (555 aa).

Disordered stretches follow at residues 31-82 (MSVS…SVSN) and 124-147 (DHSI…KQHH). The span at 32–42 (SVSSRSSQEES) shows a compositional bias: low complexity. Positions 48 to 61 (ESVSSLSMQEQQTE) are enriched in polar residues. Residues 129 to 142 (SGVTRSTVSTVRPT) show a composition bias toward low complexity. One can recognise an F-box domain in the interval 196–246 (HKDLNSLPHEIMSKIVSHLDQRDVTMCLYVNKNMYSTAVRQLYKEPFFSST). The span at 327-346 (SSSSLSCSRTSSNSNSSTES) shows a compositional bias: low complexity. Positions 327 to 354 (SSSSLSCSRTSSNSNSSTESKPVKKRRS) are disordered.

Functionally, F-box protein probably involved in ubiquitin conjugation pathway. The protein is F-box protein COS111 (COS111) of Yarrowia lipolytica (strain CLIB 122 / E 150) (Yeast).